A 382-amino-acid chain; its full sequence is MTFSVVIVAAGSGTRAGPGQAKQWRVLAGRPVLRWSVEAFLAAGAAEVVVVTTADGEAFLPRMLEGLQGWRSTLGGATRALSVQAGLAALSERPGAEPVMIHDAARPFVSRNVILALLGALSDADLALPALAVADTLKRQPTGEAAQTVSREHLWRAQTPQAARRDTLIAAYAAWTHGEPTDDAQVVEAAGGRIALTAGDPLLTKLTYPEDFAMAEHLAGVARVTRVGQGFDAHRWGPGEEVWLCGVAIKHDETLVGHSDADAGLHALTDAILGAIGEGDIGDHFPPTDPKWKGAASDQFLKHAVDLVTAKGGALVNVDVTLICERPKIKPHRQAMRERLAEILSIPVDRVSVKATTTEKMGFTGRGEGLAASAVVAVETPA.

Residues 1–225 (MTFSVVIVAA…EHLAGVARVT (225 aa)) are 2-C-methyl-D-erythritol 4-phosphate cytidylyltransferase. Residues 226–382 (RVGQGFDAHR…SAVVAVETPA (157 aa)) form a 2-C-methyl-D-erythritol 2,4-cyclodiphosphate synthase region. 2 residues coordinate a divalent metal cation: aspartate 232 and histidine 234. Residues 232-234 (DAH) and 258-259 (HS) contribute to the 4-CDP-2-C-methyl-D-erythritol 2-phosphate site. Histidine 266 is an a divalent metal cation binding site. 4-CDP-2-C-methyl-D-erythritol 2-phosphate-binding positions include 280-282 (DIG), 356-359 (TTTE), phenylalanine 363, and arginine 366.

The protein in the N-terminal section; belongs to the IspD/TarI cytidylyltransferase family. IspD subfamily. This sequence in the C-terminal section; belongs to the IspF family. A divalent metal cation is required as a cofactor.

The enzyme catalyses 2-C-methyl-D-erythritol 4-phosphate + CTP + H(+) = 4-CDP-2-C-methyl-D-erythritol + diphosphate. It carries out the reaction 4-CDP-2-C-methyl-D-erythritol 2-phosphate = 2-C-methyl-D-erythritol 2,4-cyclic diphosphate + CMP. Its pathway is isoprenoid biosynthesis; isopentenyl diphosphate biosynthesis via DXP pathway; isopentenyl diphosphate from 1-deoxy-D-xylulose 5-phosphate: step 2/6. The protein operates within isoprenoid biosynthesis; isopentenyl diphosphate biosynthesis via DXP pathway; isopentenyl diphosphate from 1-deoxy-D-xylulose 5-phosphate: step 4/6. Its function is as follows. Bifunctional enzyme that catalyzes the formation of 4-diphosphocytidyl-2-C-methyl-D-erythritol from CTP and 2-C-methyl-D-erythritol 4-phosphate (MEP) (IspD), and catalyzes the conversion of 4-diphosphocytidyl-2-C-methyl-D-erythritol 2-phosphate (CDP-ME2P) to 2-C-methyl-D-erythritol 2,4-cyclodiphosphate (ME-CPP) with a corresponding release of cytidine 5-monophosphate (CMP) (IspF). The polypeptide is Bifunctional enzyme IspD/IspF (Caulobacter vibrioides (strain ATCC 19089 / CIP 103742 / CB 15) (Caulobacter crescentus)).